Consider the following 69-residue polypeptide: Putative membrane protein insertion efficiency factor (69 aa).

The protein belongs to the UPF0161 family.

It is found in the cell membrane. Could be involved in insertion of integral membrane proteins into the membrane. The chain is Putative membrane protein insertion efficiency factor from Thermomicrobium roseum (strain ATCC 27502 / DSM 5159 / P-2).